Here is a 295-residue protein sequence, read N- to C-terminus: Protoheme IX farnesyltransferase 2 (295 aa).

9 helical membrane-spanning segments follow: residues 9 to 29, 36 to 56, 83 to 103, 108 to 128, 135 to 155, 163 to 183, 209 to 229, 230 to 250, and 264 to 284; these read ITKP…FFLA, FALF…GCVF, LPLA…LLYV, LSAF…SLWL, GTLV…CAVS, VTLL…IAIF, IVLY…GGYA, GLGY…MAWG, and VFGF…VDSQ.

Belongs to the UbiA prenyltransferase family. Protoheme IX farnesyltransferase subfamily.

It is found in the cell inner membrane. It carries out the reaction heme b + (2E,6E)-farnesyl diphosphate + H2O = Fe(II)-heme o + diphosphate. The protein operates within porphyrin-containing compound metabolism; heme O biosynthesis; heme O from protoheme: step 1/1. In terms of biological role, converts heme B (protoheme IX) to heme O by substitution of the vinyl group on carbon 2 of heme B porphyrin ring with a hydroxyethyl farnesyl side group. This is Protoheme IX farnesyltransferase 2 from Pseudomonas putida (strain GB-1).